A 221-amino-acid polypeptide reads, in one-letter code: Pre-hexon-linking protein VIII (221 aa).

T65 is subject to Phosphothreonine; by host. Positions 113–150 are excised as a propeptide; the sequence is AAPWSGVKTGSFCGRGLQLAEPPTTAIYPSGLFHLGRG.

The protein belongs to the adenoviridae hexon-linking protein family. Interacts with the peripentonal hexons as well as the hexons in the facets. Part of a complex composed of the core-capsid bridging protein, the endosome lysis protein VI and the hexon-linking protein VIII; these interactions bridge the virus core to the capsid. Cleaved by the viral protease during virion maturation. May cause the middle segment to be shed from the capsid.

It is found in the virion. Its subcellular location is the host nucleus. In terms of biological role, structural component of the virion that acts as a cement protein on the capsid interior and which glue the peripentonal hexons and group-of-nine hexons together. The polypeptide is Pre-hexon-linking protein VIII (Sus scrofa (Pig)).